A 240-amino-acid polypeptide reads, in one-letter code: Uridylate kinase (240 aa).

An ATP-binding site is contributed by 13 to 16; the sequence is KFSG. UMP is bound at residue Gly55. Gly56 and Arg60 together coordinate ATP. UMP-binding positions include Asp76 and 137–144; that span reads TGNPFFTT. The ATP site is built by Thr164, Tyr170, and Asp173.

Belongs to the UMP kinase family. As to quaternary structure, homohexamer.

Its subcellular location is the cytoplasm. It carries out the reaction UMP + ATP = UDP + ADP. It functions in the pathway pyrimidine metabolism; CTP biosynthesis via de novo pathway; UDP from UMP (UMPK route): step 1/1. Its activity is regulated as follows. Inhibited by UTP. Its function is as follows. Catalyzes the reversible phosphorylation of UMP to UDP. The sequence is that of Uridylate kinase from Helicobacter pylori (strain J99 / ATCC 700824) (Campylobacter pylori J99).